We begin with the raw amino-acid sequence, 533 residues long: Calcineurin-interacting protein 3 (533 aa).

Disordered regions lie at residues methionine 1 to isoleucine 30, proline 53 to arginine 85, and methionine 359 to proline 404. Over residues lysine 61–arginine 85 the composition is skewed to basic and acidic residues. Residues methionine 359–serine 372 show a composition bias toward polar residues. Basic and acidic residues predominate over residues proline 373–isoleucine 384.

It is found in the nucleus. The chain is Calcineurin-interacting protein 3 from Caenorhabditis elegans.